A 67-amino-acid polypeptide reads, in one-letter code: UPF0337 protein BCE_3655 (67 aa).

This sequence belongs to the UPF0337 (CsbD) family.

This is UPF0337 protein BCE_3655 from Bacillus cereus (strain ATCC 10987 / NRS 248).